The chain runs to 566 residues: Oxygen-dependent choline dehydrogenase (566 aa).

Position 7–36 (7–36 (DYIICGAGSAGNVLATRLTEDPNVTVLLLE)) interacts with FAD. The disordered stretch occupies residues 180–203 (NGYQQEGFGPMDRTVTPKGRRAST). H474 (proton acceptor) is an active-site residue.

Belongs to the GMC oxidoreductase family. FAD is required as a cofactor.

The enzyme catalyses choline + A = betaine aldehyde + AH2. It catalyses the reaction betaine aldehyde + NAD(+) + H2O = glycine betaine + NADH + 2 H(+). Its pathway is amine and polyamine biosynthesis; betaine biosynthesis via choline pathway; betaine aldehyde from choline (cytochrome c reductase route): step 1/1. Involved in the biosynthesis of the osmoprotectant glycine betaine. Catalyzes the oxidation of choline to betaine aldehyde and betaine aldehyde to glycine betaine at the same rate. The protein is Oxygen-dependent choline dehydrogenase of Burkholderia ambifaria (strain MC40-6).